Reading from the N-terminus, the 337-residue chain is Tryptophan--tRNA ligase 2 (337 aa).

Residues 13 to 15 (QPT) and 22 to 23 (GN) contribute to the ATP site. The 'HIGH' region motif lies at 14–23 (PTAGSFHLGN). Asp139 is a binding site for L-tryptophan. ATP contacts are provided by residues 151 to 153 (GED), Ile190, and 199 to 203 (KMSKS). The 'KMSKS' region signature appears at 199-203 (KMSKS).

It belongs to the class-I aminoacyl-tRNA synthetase family. In terms of assembly, homodimer.

It is found in the cytoplasm. It carries out the reaction tRNA(Trp) + L-tryptophan + ATP = L-tryptophyl-tRNA(Trp) + AMP + diphosphate + H(+). Its function is as follows. Catalyzes the attachment of tryptophan to tRNA(Trp). The polypeptide is Tryptophan--tRNA ligase 2 (Streptomyces avermitilis (strain ATCC 31267 / DSM 46492 / JCM 5070 / NBRC 14893 / NCIMB 12804 / NRRL 8165 / MA-4680)).